We begin with the raw amino-acid sequence, 69 residues long: Light-harvesting protein B-1015 alpha chain (69 aa).

Residues 2–20 (ATEYRTASWKLWLILDPRR) lie on the Cytoplasmic side of the membrane. The helical transmembrane segment at 21 to 41 (VLTALFVYLTVIALLIHFGLL) threads the bilayer. His37 is an a bacteriochlorophyll binding site. Over 42-59 (STDRLNWWEFQRGLPKAA) the chain is Periplasmic. Residues 60–69 (SLVVVPPAVG) constitute a propeptide that is removed on maturation.

The protein belongs to the antenna complex alpha subunit family. The core complex is formed by different alpha and beta chains, binding bacteriochlorophyll molecules, and arranged most probably in tetrameric structures disposed around the reaction center. The non-pigmented gamma chains may constitute additional components.

It is found in the cell inner membrane. Functionally, antenna complexes are light-harvesting systems, which transfer the excitation energy to the reaction centers. The chain is Light-harvesting protein B-1015 alpha chain (pufA) from Blastochloris viridis (Rhodopseudomonas viridis).